We begin with the raw amino-acid sequence, 82 residues long: Cytochrome b559 subunit alpha (82 aa).

A helical transmembrane segment spans residues 21 to 35 (VIHSITIPALFIAGW). His-23 contributes to the heme binding site.

The protein belongs to the PsbE/PsbF family. In terms of assembly, heterodimer of an alpha subunit and a beta subunit. PSII is composed of 1 copy each of membrane proteins PsbA, PsbB, PsbC, PsbD, PsbE, PsbF, PsbH, PsbI, PsbJ, PsbK, PsbL, PsbM, PsbT, PsbX, PsbY, PsbZ, Psb30/Ycf12, peripheral proteins PsbO, CyanoQ (PsbQ), PsbU, PsbV and a large number of cofactors. It forms dimeric complexes. The cofactor is heme b.

The protein resides in the cellular thylakoid membrane. In terms of biological role, this b-type cytochrome is tightly associated with the reaction center of photosystem II (PSII). PSII is a light-driven water:plastoquinone oxidoreductase that uses light energy to abstract electrons from H(2)O, generating O(2) and a proton gradient subsequently used for ATP formation. It consists of a core antenna complex that captures photons, and an electron transfer chain that converts photonic excitation into a charge separation. The polypeptide is Cytochrome b559 subunit alpha (Nostoc punctiforme (strain ATCC 29133 / PCC 73102)).